Here is a 272-residue protein sequence, read N- to C-terminus: MTSSSSNRQFLHRTANTFLTYPQCPEHPEIISQRIWDLVGRWNPLYIICAQEAHEDGNMHLHALIQTDKQVRTTDSRFFDIDGFHPNIQSAMSPNKVRDYILKEPLALFERGTFVPRKKTFLGNSSKGNSEKKPSKDEIMQDIISHATSKPEYLSMVRKSFPYDWATKLQYFEYSANKLFPDIQEEFINPHPTSEPDLLCNESIKDWLQPNIYQVSPQAYMLLQPNCYTVDDAISDLQWLDDLTSKQIMDQESRASTSSVQQGQENLLGPEA.

The CRESS-DNA virus Rep endonuclease domain maps to 11 to 114 (LHRTANTFLT…PLALFERGTF (104 aa)). The RCR-1 signature appears at 18-21 (FLTY). The a divalent metal cation site is built by E52, H60, and H62. The RCR-2 motif lies at 60 to 62 (HLH). The For DNA cleavage activity role is filled by Y100. An RCR-3 motif is present at residues 100–103 (YILK). E104 is a binding site for a divalent metal cation. Residues 175–187 (SANKLFPDIQEEF) form an oligomerization region. Positions 198 to 202 (LLCNE) are binding to RBR1. The transactivation stretch occupies residues 221–230 (MLLQPNCYTV). The segment covering 250-265 (DQESRASTSSVQQGQE) has biased composition (polar residues). Residues 250–272 (DQESRASTSSVQQGQENLLGPEA) form a disordered region.

This sequence belongs to the geminiviridae Rep protein family. As to quaternary structure, homooligomer. Interacts with host retinoblastoma-related protein 1 (RBR1), and may thereby deregulate the host cell cycle. Part of the C- and V-complexes which are RepA-Rep-DNA complexes involved in the c-sense and v-sense transcription. It depends on Mg(2+) as a cofactor. Mn(2+) serves as cofactor.

It is found in the host nucleus. It localises to the host cytoplasm. Functionally, implicated in enhancement of V-sense gene expression. Acts a an inhibitor of C-sense gene transcription. In Avena sativa (Oat), this protein is Replication-associated protein A.